A 652-amino-acid chain; its full sequence is Sodium-dependent phosphate transporter 1-A (652 aa).

The Cytoplasmic segment spans residues 1–25 (MESTTLASLAAVSVLAAGAQTDMSD). Residues 26–46 (VLWLLILGFVIAFILAFSVGA) traverse the membrane as a helical segment. Residues 47-66 (NDVANSFGTAVGSGVVTLRQ) are Extracellular-facing. Residues 67–87 (ACILATIFETVGAMLLGAKVS) traverse the membrane as a helical segment. Residues 88–104 (ETIRSGIIDVHMYNGSE) lie on the Cytoplasmic side of the membrane. Residues 105-125 (AVLMAGSISAMFGSAVWQLAA) form a helical membrane-spanning segment. Residues 126–162 (SFLKLPISGTHCIVGATIGFSMVARGHQGVKWLELLR) lie on the Extracellular side of the membrane. Residues 163–183 (IVASWFLSPLLSGIMSAVLFY) form a helical membrane-spanning segment. The Cytoplasmic segment spans residues 184-201 (FVRKFILNKDDPVPNGLR). The helical transmembrane segment at 202-222 (ALPVFYAVTMGINLFSIMFTG) threads the bilayer. Residues 223-234 (APMLGFDRIPWW) lie on the Extracellular side of the membrane. The chain crosses the membrane as a helical span at residues 235–255 (GTLLISLGCAILTALVVWFIV). Over 256–482 (CPRLKKKMQS…IDELEIDKPE (227 aa)) the chain is Cytoplasmic. The segment at 278-308 (TQLVEKKPSSNGLMDHHPGPPRNYSPVPQTP) is disordered. Over residues 281–295 (VEKKPSSNGLMDHHP) the composition is skewed to basic and acidic residues. The span at 297–308 (PPRNYSPVPQTP) shows a compositional bias: pro residues. Residues 483 to 503 (VSTLFQFLQILTACFGSFAHG) traverse the membrane as a helical segment. The Extracellular portion of the chain corresponds to 504–531 (GNDVSNAIGPLVALWLIYDSASVAPSAP). A helical transmembrane segment spans residues 532 to 552 (TPIWLLLYGGVGICTGLWIWG). Residues 553-571 (RRVIQTMGKDLTPITPSSG) lie on the Cytoplasmic side of the membrane. A helical membrane pass occupies residues 572 to 592 (FSIELASAITVVVASNIGLPV). Over 593 to 621 (STTHCKVGSVVSVGWLRSRKAVDWHLFRN) the chain is Extracellular. A helical transmembrane segment spans residues 622–642 (IFIAWFVTVPISGLISAAIMA). Residues 643–652 (LFYYVILPLT) are Cytoplasmic-facing.

This sequence belongs to the inorganic phosphate transporter (PiT) (TC 2.A.20) family.

The protein resides in the membrane. Functionally, sodium-phosphate symporter which plays a fundamental housekeeping role in phosphate transport. The protein is Sodium-dependent phosphate transporter 1-A (slc20a1a) of Danio rerio (Zebrafish).